A 701-amino-acid polypeptide reads, in one-letter code: MSSARRPSKLLSEKQSDKLAQIIQNFFLKAAHVIFHFRVAFPSVVLQPDDSYGAMGDTFSQSKYNNRWFNLDLGNYEIPRTELSLWRNKDILSLPPLVLETFLDLRGLSSNQTLMLDDVIVKTSKKSEIVLERWLIEFDLSTFDNEVMEFPSIYKKIIILFRSLYLLAGLLPSYRLRDKLVKSKSKNSAIHVSCRILDGSKPITSKGRIGLSKKLLSEEEHTSSKKLQPVLTPIGALRVSVSYRTNCNFQVSDTEEALSSQFMLDHLPSVRTNYDSDGNSLTSPMDYLQNRVSSASIHWSDQSPRRRSSTRSVQLFKVGSINSSSSPPPGATQSNQSVSSFSTSKPIPVTLNKTNSSASLVPILRQNKDSLPKSIGSMVQNQMQETGHQVSSNSRRFSSSFGSRFRTVSSRNNSLDGQLVVANQPFSTPSNNPILHNFRSRNKSPSVSSTELGPSSSIYMDDDLDSFMKMLDSKPDLRFPSNSPSVYEDPLANFKTFQKSNDFLALEQQQHGSPTSNQIMIHSQSQTSQSQVFKRTVFSDRSRRGSVSSNYSPSSQALRPGASAPMVTPSVTYGKFHASSGSPSNSSLAQYLRHNSSPPASATAVATVHNSLRRLTSSSQRTNTNSTNSSTRPVNPELLKLKSFNEDVFESDDDEHDEHSPRSTDTKSRNTGPSSGHAEDDEDDLLFAMSDMTLAKNNQEF.

Disordered stretches follow at residues 319–343, 521–563, and 577–701; these read GSINSSSSPPPGATQSNQSVSSFST, IHSQ…PGAS, and HASS…NQEF. The span at 332 to 343 shows a compositional bias: low complexity; sequence TQSNQSVSSFST. 2 stretches are compositionally biased toward polar residues: residues 521 to 533 and 545 to 557; these read IHSQSQTSQSQVF and GSVSSNYSPSSQA. The segment covering 596–632 has biased composition (low complexity); it reads SSPPASATAVATVHNSLRRLTSSSQRTNTNSTNSSTR. Residues 647–656 are compositionally biased toward acidic residues; that stretch reads DVFESDDDEH. Positions 657-668 are enriched in basic and acidic residues; sequence DEHSPRSTDTKS.

Belongs to the ATG13 family. Fungi subfamily. Interacts with ATG1 to form the ATG1-ATG13 kinase complex.

Its subcellular location is the cytoplasm. It localises to the preautophagosomal structure. Activates the ATG1 kinase in a nutritional condition dependent manner through the TOR pathway, leading to autophagy. Also involved in cytoplasm to vacuole transport (Cvt) and more specifically in Cvt vesicle formation. Seems to play a role in the switching machinery regulating the conversion between the Cvt pathway and autophagy. Finally, ATG13 is also required for glycogen storage during stationary phase. In Pichia angusta (Yeast), this protein is Autophagy-related protein 13 (ATG13).